The chain runs to 125 residues: Cyclic diguanosine monophosphate-binding protein PA4608 (125 aa).

6 to 13 lines the 3',3'-c-di-GMP pocket; it reads DERRRFHR. One can recognise a PilZ domain in the interval 7 to 103; that stretch reads ERRRFHRIAF…SISHLRRLVE (97 aa). Positions 9-13 match the RXXXR motif; surrounds the surface of the c-di-GMP binding site motif; that stretch reads RRFHR. The DXSXXG motif; surrounds the surface of the c-di-GMP binding site motif lies at 35–40; sequence DVSLHG. Tryptophan 77 serves as a coordination point for 3',3'-c-di-GMP.

In terms of assembly, monomer in both c-di-GMP-bound and free forms.

In terms of biological role, binds the second messenger bis-(3'-5') cyclic dimeric guanosine monophosphate (c-di-GMP). Can bind two c-di-GMP molecules per monomer. May play a role in bacterial second-messenger regulated processes. Binding to c-di-GMP induces a conformational change of the C- and N-termini resulting in the exposure of a highly negative surface on one side of the protein to a possible effector protein. In Pseudomonas aeruginosa (strain ATCC 15692 / DSM 22644 / CIP 104116 / JCM 14847 / LMG 12228 / 1C / PRS 101 / PAO1), this protein is Cyclic diguanosine monophosphate-binding protein PA4608.